We begin with the raw amino-acid sequence, 457 residues long: Siroheme synthase (457 aa).

Residues 1 to 204 are precorrin-2 dehydrogenase /sirohydrochlorin ferrochelatase; sequence MDHLPIFCQL…ADEKAVNATT (204 aa). NAD(+) is bound by residues 22–23 and 43–44; these read DV and LT. Residue Ser128 is modified to Phosphoserine. The tract at residues 216 to 457 is uroporphyrinogen-III C-methyltransferase; the sequence is GEVVLVGAGP…RDKLNWFSNY (242 aa). Pro225 contacts S-adenosyl-L-methionine. The active-site Proton acceptor is the Asp248. Lys270 serves as the catalytic Proton donor. S-adenosyl-L-methionine is bound by residues 301–303, Ile306, 331–332, Met382, and Gly411; these read GGD and TA.

It in the N-terminal section; belongs to the precorrin-2 dehydrogenase / sirohydrochlorin ferrochelatase family. The protein in the C-terminal section; belongs to the precorrin methyltransferase family.

The enzyme catalyses uroporphyrinogen III + 2 S-adenosyl-L-methionine = precorrin-2 + 2 S-adenosyl-L-homocysteine + H(+). The catalysed reaction is precorrin-2 + NAD(+) = sirohydrochlorin + NADH + 2 H(+). It catalyses the reaction siroheme + 2 H(+) = sirohydrochlorin + Fe(2+). Its pathway is cofactor biosynthesis; adenosylcobalamin biosynthesis; precorrin-2 from uroporphyrinogen III: step 1/1. It participates in cofactor biosynthesis; adenosylcobalamin biosynthesis; sirohydrochlorin from precorrin-2: step 1/1. The protein operates within porphyrin-containing compound metabolism; siroheme biosynthesis; precorrin-2 from uroporphyrinogen III: step 1/1. It functions in the pathway porphyrin-containing compound metabolism; siroheme biosynthesis; siroheme from sirohydrochlorin: step 1/1. Its pathway is porphyrin-containing compound metabolism; siroheme biosynthesis; sirohydrochlorin from precorrin-2: step 1/1. Its function is as follows. Multifunctional enzyme that catalyzes the SAM-dependent methylations of uroporphyrinogen III at position C-2 and C-7 to form precorrin-2 via precorrin-1. Then it catalyzes the NAD-dependent ring dehydrogenation of precorrin-2 to yield sirohydrochlorin. Finally, it catalyzes the ferrochelation of sirohydrochlorin to yield siroheme. The protein is Siroheme synthase of Salmonella choleraesuis (strain SC-B67).